Reading from the N-terminus, the 188-residue chain is Peroxynitrite isomerase (188 aa).

The short motif at 35–41 (GTWRGEG) is the GXWXGXG element. Histidine 178 lines the heme b pocket.

The protein belongs to the nitrobindin family. As to quaternary structure, homodimer. Heme b is required as a cofactor.

It catalyses the reaction peroxynitrite = nitrate. Its pathway is nitrogen metabolism. In terms of biological role, heme-binding protein able to scavenge peroxynitrite and to protect free L-tyrosine against peroxynitrite-mediated nitration, by acting as a peroxynitrite isomerase that converts peroxynitrite to nitrate. Therefore, this protein likely plays a role in peroxynitrite sensing and in the detoxification of reactive nitrogen and oxygen species (RNS and ROS, respectively). Is able to bind nitric oxide (NO) in vitro, but may act as a sensor of peroxynitrite levels in vivo. This is Peroxynitrite isomerase from Frankia casuarinae (strain DSM 45818 / CECT 9043 / HFP020203 / CcI3).